The chain runs to 51 residues: Insulin (51 aa).

Cystine bridges form between cysteine 7–cysteine 37, cysteine 19–cysteine 50, and cysteine 36–cysteine 41.

It belongs to the insulin family. As to quaternary structure, heterodimer of a B chain and an A chain linked by two disulfide bonds.

It is found in the secreted. Functionally, insulin decreases blood glucose concentration. It increases cell permeability to monosaccharides, amino acids and fatty acids. It accelerates glycolysis, the pentose phosphate cycle, and glycogen synthesis in liver. The chain is Insulin (INS) from Ptyas dhumnades (Big-eyed ratsnake).